Here is a 187-residue protein sequence, read N- to C-terminus: Threonylcarbamoyl-AMP synthase (187 aa).

The YrdC-like domain maps to 4-187; that stretch reads TLTLSEAVTA…DARSGHILRL (184 aa).

The protein belongs to the SUA5 family. TsaC subfamily.

The protein resides in the cytoplasm. It catalyses the reaction L-threonine + hydrogencarbonate + ATP = L-threonylcarbamoyladenylate + diphosphate + H2O. Its function is as follows. Required for the formation of a threonylcarbamoyl group on adenosine at position 37 (t(6)A37) in tRNAs that read codons beginning with adenine. Catalyzes the conversion of L-threonine, HCO(3)(-)/CO(2) and ATP to give threonylcarbamoyl-AMP (TC-AMP) as the acyladenylate intermediate, with the release of diphosphate. In Xylella fastidiosa (strain 9a5c), this protein is Threonylcarbamoyl-AMP synthase.